The following is a 327-amino-acid chain: L-lactate dehydrogenase (327 aa).

NAD(+) contacts are provided by residues valine 18, aspartate 39, lysine 44, tyrosine 69, and 83 to 84; that span reads GA. Substrate contacts are provided by residues glutamine 86, arginine 92, and 124–127; that span reads NPVD. NAD(+)-binding positions include 122-124 and serine 147; that span reads AAN. Residue 152 to 155 participates in substrate binding; the sequence is DSAR. Beta-D-fructose 1,6-bisphosphate contacts are provided by arginine 157 and histidine 172. Histidine 179 (proton acceptor) is an active-site residue. Tyrosine 224 bears the Phosphotyrosine mark. A substrate-binding site is contributed by threonine 233.

It belongs to the LDH/MDH superfamily. LDH family. Homotetramer.

The protein resides in the cytoplasm. The enzyme catalyses (S)-lactate + NAD(+) = pyruvate + NADH + H(+). It participates in fermentation; pyruvate fermentation to lactate; (S)-lactate from pyruvate: step 1/1. With respect to regulation, allosterically activated by fructose 1,6-bisphosphate (FBP). Its function is as follows. Catalyzes the conversion of lactate to pyruvate. The chain is L-lactate dehydrogenase from Streptococcus equi subsp. zooepidemicus (strain H70).